Consider the following 449-residue polypeptide: N-succinylarginine dihydrolase (449 aa).

Substrate is bound by residues 19-28 (GGLSYGNVAS), N110, and 137-138 (HR). The segment at 23–43 (YGNVASQSNSQQASNPREAAR) is disordered. Residues 27–37 (ASQSNSQQASN) are compositionally biased toward low complexity. E174 is an active-site residue. Residue R214 participates in substrate binding. Residue H250 is part of the active site. Substrate is bound by residues D252 and N365. C371 serves as the catalytic Nucleophile.

This sequence belongs to the succinylarginine dihydrolase family. As to quaternary structure, homodimer.

It catalyses the reaction N(2)-succinyl-L-arginine + 2 H2O + 2 H(+) = N(2)-succinyl-L-ornithine + 2 NH4(+) + CO2. It participates in amino-acid degradation; L-arginine degradation via AST pathway; L-glutamate and succinate from L-arginine: step 2/5. Its function is as follows. Catalyzes the hydrolysis of N(2)-succinylarginine into N(2)-succinylornithine, ammonia and CO(2). In Pseudomonas putida (strain ATCC 700007 / DSM 6899 / JCM 31910 / BCRC 17059 / LMG 24140 / F1), this protein is N-succinylarginine dihydrolase.